The primary structure comprises 112 residues: Small ribosomal subunit protein bS6 (112 aa).

The protein belongs to the bacterial ribosomal protein bS6 family.

Its function is as follows. Binds together with bS18 to 16S ribosomal RNA. The polypeptide is Small ribosomal subunit protein bS6 (Chlamydia caviae (strain ATCC VR-813 / DSM 19441 / 03DC25 / GPIC) (Chlamydophila caviae)).